We begin with the raw amino-acid sequence, 84 residues long: Esculentin-1ISb (84 aa).

Positions 1-22 are cleaved as a signal peptide; it reads MFTLKKPLLLIVLLGIISLSLC. The propeptide at 23–36 is removed in mature form; it reads EQERAADEDEGTKI. A disulfide bridge links C78 with C84.

In terms of tissue distribution, expressed by the skin glands.

It localises to the secreted. In terms of biological role, has antimicrobial activity against Gram-negative bacterium E.coli ATCC 8739 (MIC=3.1 ug), against Gram positive bacteria S.aureus ATCC 6538 (MIC=3.1 ug), methicillin-resistant S.aureus ATCC 43300 (MIC=12.5 ug), B.subtilis ATCC 6633 (MIC=12.5 ug) and against fungus C.albicans ATCC 90028 (MIC=50 ug). The sequence is that of Esculentin-1ISb from Odorrana ishikawae (Ishikawa's frog).